Reading from the N-terminus, the 349-residue chain is Anthranilate phosphoribosyltransferase (349 aa).

Residues Gly-82, 85 to 86 (GD), 92 to 95 (NVST), 110 to 118 (KHGNRGVSS), and Ser-122 contribute to the 5-phospho-alpha-D-ribose 1-diphosphate site. Gly-82 contributes to the anthranilate binding site. Residue Ser-94 coordinates Mg(2+). Asn-113 is a binding site for anthranilate. Arg-168 is an anthranilate binding site. Mg(2+) contacts are provided by Asp-227 and Glu-228.

The protein belongs to the anthranilate phosphoribosyltransferase family. Homodimer. Requires Mg(2+) as cofactor.

It catalyses the reaction N-(5-phospho-beta-D-ribosyl)anthranilate + diphosphate = 5-phospho-alpha-D-ribose 1-diphosphate + anthranilate. Its pathway is amino-acid biosynthesis; L-tryptophan biosynthesis; L-tryptophan from chorismate: step 2/5. Functionally, catalyzes the transfer of the phosphoribosyl group of 5-phosphorylribose-1-pyrophosphate (PRPP) to anthranilate to yield N-(5'-phosphoribosyl)-anthranilate (PRA). In Acinetobacter baylyi (strain ATCC 33305 / BD413 / ADP1), this protein is Anthranilate phosphoribosyltransferase.